Consider the following 382-residue polypeptide: Serine protease 43 (382 aa).

A signal peptide spans 1–27; the sequence is MGGFCGADRGGFLALLVWLQLLQPLFS. The segment at 30–97 is disordered; the sequence is YKPREDSGVM…SGTTTKITLE (68 aa). Composition is skewed to polar residues over residues 56 to 68 and 85 to 95; these read AQQS…SISH and GSPSGTTTKIT. The region spanning 119–355 is the Peptidase S1 domain; sequence VDPGSLSAGR…YNEWVSYVLS (237 aa). A disulfide bond links Cys-144 and Cys-160. Residues His-159 and Asp-205 each act as charge relay system in the active site. Cystine bridges form between Cys-239–Cys-313, Cys-272–Cys-293, and Cys-303–Cys-331. Catalysis depends on Ser-307, which acts as the Charge relay system. A helical transmembrane segment spans residues 362 to 382; that stretch reads PMGVLVLYLSLVFPLALLVAL.

This sequence belongs to the peptidase S1 family. Testis-specific. Expressed in germ cells at the stages from late pachytene spermatocytes to spermatids.

The protein resides in the cell membrane. Its function is as follows. Plays a role in spermatogenesis. Involved in germ cell survival during meiosis. Lacks protease activity in vitro. In Mus musculus (Mouse), this protein is Serine protease 43.